Here is a 347-residue protein sequence, read N- to C-terminus: Holliday junction branch migration complex subunit RuvB (347 aa).

The interval 4-185 is large ATPase domain (RuvB-L); that stretch reads TDRLITPAPL…FGIISRLEFY (182 aa). ATP is bound by residues leucine 24, arginine 25, glycine 66, lysine 69, threonine 70, threonine 71, 132–134, arginine 175, tyrosine 185, and arginine 222; that span reads EDY. Threonine 70 serves as a coordination point for Mg(2+). Residues 186 to 256 form a small ATPAse domain (RuvB-S) region; it reads SVEELTQIVM…VADAALLMLD (71 aa). Residues 259-347 are head domain (RuvB-H); the sequence is AIGLDVMDRK…LSADLWDEKQ (89 aa). Arginine 295, arginine 314, and arginine 319 together coordinate DNA.

Belongs to the RuvB family. Homohexamer. Forms an RuvA(8)-RuvB(12)-Holliday junction (HJ) complex. HJ DNA is sandwiched between 2 RuvA tetramers; dsDNA enters through RuvA and exits via RuvB. An RuvB hexamer assembles on each DNA strand where it exits the tetramer. Each RuvB hexamer is contacted by two RuvA subunits (via domain III) on 2 adjacent RuvB subunits; this complex drives branch migration. In the full resolvosome a probable DNA-RuvA(4)-RuvB(12)-RuvC(2) complex forms which resolves the HJ.

It is found in the cytoplasm. It catalyses the reaction ATP + H2O = ADP + phosphate + H(+). In terms of biological role, the RuvA-RuvB-RuvC complex processes Holliday junction (HJ) DNA during genetic recombination and DNA repair, while the RuvA-RuvB complex plays an important role in the rescue of blocked DNA replication forks via replication fork reversal (RFR). RuvA specifically binds to HJ cruciform DNA, conferring on it an open structure. The RuvB hexamer acts as an ATP-dependent pump, pulling dsDNA into and through the RuvAB complex. RuvB forms 2 homohexamers on either side of HJ DNA bound by 1 or 2 RuvA tetramers; 4 subunits per hexamer contact DNA at a time. Coordinated motions by a converter formed by DNA-disengaged RuvB subunits stimulates ATP hydrolysis and nucleotide exchange. Immobilization of the converter enables RuvB to convert the ATP-contained energy into a lever motion, pulling 2 nucleotides of DNA out of the RuvA tetramer per ATP hydrolyzed, thus driving DNA branch migration. The RuvB motors rotate together with the DNA substrate, which together with the progressing nucleotide cycle form the mechanistic basis for DNA recombination by continuous HJ branch migration. Branch migration allows RuvC to scan DNA until it finds its consensus sequence, where it cleaves and resolves cruciform DNA. The chain is Holliday junction branch migration complex subunit RuvB from Nitrosospira multiformis (strain ATCC 25196 / NCIMB 11849 / C 71).